A 146-amino-acid polypeptide reads, in one-letter code: Large ribosomal subunit protein uL13 (146 aa).

The protein belongs to the universal ribosomal protein uL13 family. Part of the 50S ribosomal subunit.

Its function is as follows. This protein is one of the early assembly proteins of the 50S ribosomal subunit, although it is not seen to bind rRNA by itself. It is important during the early stages of 50S assembly. The chain is Large ribosomal subunit protein uL13 from Spiroplasma citri.